A 185-amino-acid polypeptide reads, in one-letter code: NADH-quinone oxidoreductase subunit B (185 aa).

Residues Cys-38, Cys-39, Cys-104, and Cys-133 each coordinate [4Fe-4S] cluster.

This sequence belongs to the complex I 20 kDa subunit family. As to quaternary structure, NDH-1 is composed of 14 different subunits. Subunits NuoB, C, D, E, F, and G constitute the peripheral sector of the complex. The cofactor is [4Fe-4S] cluster.

The protein localises to the cell membrane. The enzyme catalyses a quinone + NADH + 5 H(+)(in) = a quinol + NAD(+) + 4 H(+)(out). NDH-1 shuttles electrons from NADH, via FMN and iron-sulfur (Fe-S) centers, to quinones in the respiratory chain. The immediate electron acceptor for the enzyme in this species is believed to be a menaquinone. Couples the redox reaction to proton translocation (for every two electrons transferred, four hydrogen ions are translocated across the cytoplasmic membrane), and thus conserves the redox energy in a proton gradient. The polypeptide is NADH-quinone oxidoreductase subunit B (Cutibacterium acnes (strain DSM 16379 / KPA171202) (Propionibacterium acnes)).